We begin with the raw amino-acid sequence, 75 residues long: Small ribosomal subunit protein bS18 (75 aa).

The protein belongs to the bacterial ribosomal protein bS18 family. As to quaternary structure, part of the 30S ribosomal subunit. Forms a tight heterodimer with protein bS6.

In terms of biological role, binds as a heterodimer with protein bS6 to the central domain of the 16S rRNA, where it helps stabilize the platform of the 30S subunit. The polypeptide is Small ribosomal subunit protein bS18 (Acinetobacter baumannii (strain AB307-0294)).